Consider the following 469-residue polypeptide: Protein POLLENLESS 3-LIKE 1 (469 aa).

Positions 1-20 (MRRRESRGAKGGGFLTPPPS) are disordered. TPR repeat units lie at residues 88–121 (DSAL…CPFE), 124–157 (DSID…LEQD), and 184–217 (ARIL…EPDN). A coiled-coil region spans residues 139–191 (RITEVAELLEHKLRTLEQDKHYGGRIKIAKRSHEEQNNKTIEQEKARILGNLA). The segment covering 314–338 (NIHKTNSHASSESVEQNSPGLTTQP) has biased composition (polar residues). The disordered stretch occupies residues 314–339 (NIHKTNSHASSESVEQNSPGLTTQPR).

It belongs to the MS5 protein family. In terms of tissue distribution, expressed in floral and vegetative organs. Also barely detectable in leaves and stems.

It is found in the nucleus. In terms of biological role, probably involved in the regulation of cell division. This chain is Protein POLLENLESS 3-LIKE 1, found in Arabidopsis thaliana (Mouse-ear cress).